Consider the following 89-residue polypeptide: Class II hydrophobin 2 (89 aa).

Residues 1 to 15 form the signal peptide; sequence MKLYIAAALLTLGLA. Disulfide bonds link Cys-34–Cys-74, Cys-45–Cys-66, Cys-46–Cys-58, and Cys-75–Cys-86.

This sequence belongs to the cerato-ulmin hydrophobin family. In terms of assembly, homodimer. Homodimers further self-assemble to form highly ordered films at water-air interfaces through intermolecular interactions.

Its subcellular location is the secreted. The protein resides in the cell wall. In terms of biological role, aerial growth, conidiation, and dispersal of filamentous fungi in the environment rely upon a capability of their secreting small amphipathic proteins called hydrophobins (HPBs) with low sequence identity. Class I can self-assemble into an outermost layer of rodlet bundles on aerial cell surfaces, conferring cellular hydrophobicity that supports fungal growth, development and dispersal; whereas Class II form highly ordered films at water-air interfaces through intermolecular interactions but contribute nothing to the rodlet structure. The polypeptide is Class II hydrophobin 2 (Trichoderma asperellum (strain ATCC 204424 / CBS 433.97 / NBRC 101777)).